A 273-amino-acid chain; its full sequence is Photosystem I chlorophyll a/b-binding protein 3-1, chloroplastic (273 aa).

The transit peptide at 1–39 (MAAQALVSSSLTSSVQTARQIFGSKPVASASQKKSSFVV) directs the protein to the chloroplast. Trp56 is a chlorophyll b binding site. The chlorophyll a site is built by Phe76, Ser82, and Glu100. Residue Arg105 participates in chlorophyll b binding. A helical membrane pass occupies residues 106–126 (FAMLGAAGAIAPEILGKAGLI). Ile140 lines the chlorophyll b pocket. The chain crosses the membrane as a helical span at residues 146 to 166 (YTYWADNYTLFVLEMALMGFA). Chlorophyll b contacts are provided by Glu167 and Arg170. A Phosphoserine modification is found at Ser195. Lys224, Glu225, Asn228, Arg230, Gln242, and His257 together coordinate chlorophyll a. Residues 231 to 251 (LAMLAILGYFIQGLVTGVGPY) traverse the membrane as a helical segment. Phe272 is a binding site for chlorophyll b.

It belongs to the light-harvesting chlorophyll a/b-binding (LHC) protein family. As to quaternary structure, the LHC complex consists of chlorophyll a-b binding proteins. Red-emitting heterodimer with LHCA2. Interacts with LHCA5. Binds to carotenoids. It depends on Binds at least 14 chlorophylls (8 Chl-a and 6 Chl-b) and carotenoids such as lutein and neoxanthin. as a cofactor. Post-translationally, photoregulated by reversible phosphorylation of its threonine residues.

It localises to the plastid. The protein resides in the chloroplast thylakoid membrane. The light-harvesting complex (LHC) functions as a light receptor, it captures and delivers excitation energy to photosystems with which it is closely associated, here photosystem I. The chain is Photosystem I chlorophyll a/b-binding protein 3-1, chloroplastic from Arabidopsis thaliana (Mouse-ear cress).